The sequence spans 420 residues: Histidine--tRNA ligase (420 aa).

It belongs to the class-II aminoacyl-tRNA synthetase family. Homodimer.

The protein localises to the cytoplasm. It catalyses the reaction tRNA(His) + L-histidine + ATP = L-histidyl-tRNA(His) + AMP + diphosphate + H(+). The polypeptide is Histidine--tRNA ligase (Clostridioides difficile (strain 630) (Peptoclostridium difficile)).